The primary structure comprises 407 residues: Argininosuccinate synthase (407 aa).

ATP-binding positions include 12–20 (AFSGGLDTS) and A39. Y90 and S95 together coordinate L-citrulline. G120 is a binding site for ATP. Residues T122, N126, and D127 each contribute to the L-aspartate site. N126 provides a ligand contact to L-citrulline. 5 residues coordinate L-citrulline: R130, S181, S190, E266, and Y278.

It belongs to the argininosuccinate synthase family. Type 1 subfamily. As to quaternary structure, homotetramer.

Its subcellular location is the cytoplasm. It carries out the reaction L-citrulline + L-aspartate + ATP = 2-(N(omega)-L-arginino)succinate + AMP + diphosphate + H(+). It functions in the pathway amino-acid biosynthesis; L-arginine biosynthesis; L-arginine from L-ornithine and carbamoyl phosphate: step 2/3. This Nitrosospira multiformis (strain ATCC 25196 / NCIMB 11849 / C 71) protein is Argininosuccinate synthase.